Consider the following 111-residue polypeptide: Repressed By RIM101 protein 1 (111 aa).

The first 19 residues, 1–19 (MKFSTTLLALTASIAAVMS), serve as a signal peptide directing secretion. The tract at residues 71 to 90 (SGASSATGGSSAAKSGSSSG) is disordered. Ser81 carries the GPI-anchor amidated serine lipid modification. Positions 82-111 (AAKSGSSSGAGFAPVAGAGSLAAIAGLLLL) are cleaved as a propeptide — removed in mature form.

In terms of processing, the GPI-anchor is attached to the protein in the endoplasmic reticulum and serves to target the protein to the cell surface. There, the glucosamine-inositol phospholipid moiety is cleaved off and the GPI-modified mannoprotein is covalently attached via its lipidless GPI glycan remnant to the 1,6-beta-glucan of the outer cell wall layer.

The protein localises to the secreted. The protein resides in the cell wall. Its subcellular location is the membrane. Its function is as follows. Probable cell wall protein required for filamentation at low pH. The sequence is that of Repressed By RIM101 protein 1 (RBR1) from Candida albicans (strain SC5314 / ATCC MYA-2876) (Yeast).